The primary structure comprises 303 residues: uncharacterized protein (303 aa).

Disordered regions lie at residues Met-1–Ser-89 and Ser-132–Arg-159. Residues Arg-61–Ser-89 are compositionally biased toward polar residues. The next 2 membrane-spanning stretches (helical) occupy residues Leu-205–Leu-225 and Val-264–Val-284.

To M.tuberculosis Rv0007.

Its subcellular location is the cell membrane. This is an uncharacterized protein from Mycobacterium leprae (strain TN).